The following is a 357-amino-acid chain: 3-isopropylmalate dehydrogenase (357 aa).

Arg97, Arg107, Arg135, and Asp224 together coordinate substrate. Residues Asp224, Asp248, and Asp252 each coordinate Mg(2+). Position 282–294 (282–294 (GSAPDIAGQDKAN)) interacts with NAD(+).

Belongs to the isocitrate and isopropylmalate dehydrogenases family. LeuB type 1 subfamily. In terms of assembly, homodimer. It depends on Mg(2+) as a cofactor. Mn(2+) serves as cofactor.

The protein localises to the cytoplasm. It catalyses the reaction (2R,3S)-3-isopropylmalate + NAD(+) = 4-methyl-2-oxopentanoate + CO2 + NADH. It functions in the pathway amino-acid biosynthesis; L-leucine biosynthesis; L-leucine from 3-methyl-2-oxobutanoate: step 3/4. In terms of biological role, catalyzes the oxidation of 3-carboxy-2-hydroxy-4-methylpentanoate (3-isopropylmalate) to 3-carboxy-4-methyl-2-oxopentanoate. The product decarboxylates to 4-methyl-2 oxopentanoate. The polypeptide is 3-isopropylmalate dehydrogenase (Synechococcus sp. (strain CC9902)).